A 71-amino-acid chain; its full sequence is Putative membrane protein insertion efficiency factor (71 aa).

The protein belongs to the UPF0161 family.

It is found in the cell inner membrane. Its function is as follows. Could be involved in insertion of integral membrane proteins into the membrane. This is Putative membrane protein insertion efficiency factor from Nitrosospira multiformis (strain ATCC 25196 / NCIMB 11849 / C 71).